We begin with the raw amino-acid sequence, 2936 residues long: Neurobeachin (2936 aa).

The tract at residues 961–985 (ENIKKGKKGNVSTISGLSSQTAGAK) is disordered. A compositionally biased stretch (polar residues) spans 970-982 (NVSTISGLSSQTA). A phosphoserine mark is found at Ser1001 and Ser1004. Composition is skewed to polar residues over residues 1203-1220 (TSDGVSSVSERELASSTK) and 1231-1241 (TLETESSNSKA). Disordered regions lie at residues 1203 to 1222 (TSDGVSSVSERELASSTKGL), 1231 to 1265 (TLETESSNSKAVPNVDAGSIISDTERSDDGKESGK), and 1270 to 1289 (IQTTATTQAVQGRSSTQQDR). Residues 1253 to 1265 (DTERSDDGKESGK) show a composition bias toward basic and acidic residues. Over residues 1270 to 1286 (IQTTATTQAVQGRSSTQ) the composition is skewed to polar residues. The WD 1 repeat unit spans residues 1316-1358 (TTMFRIPEFKWSPMHQRLLTDLLFALETDVHVWRSHSTKSVMD). 4 disordered regions span residues 1480–1521 (QRDR…LSPI), 1639–1667 (PDTVKEKETPTPGEDIQLESSVPHTDSGM), 1701–1721 (VKKSQESLTEHPSEMLKPAPS), and 1830–1850 (TGAVDSGSSSSSSSSSFVNGA). The residue at position 1519 (Ser1519) is a Phosphoserine. Positions 1701–1714 (VKKSQESLTEHPSE) are enriched in basic and acidic residues. 2 positions are modified to phosphoserine: Ser1704 and Ser1707. Residues 1835–1845 (SGSSSSSSSSS) are compositionally biased toward low complexity. Ser2128 is modified (phosphoserine). The 109-residue stretch at 2137 to 2245 (NLAGPVVLST…TVKKVVYSLP (109 aa)) folds into the BEACH-type PH domain. The 290-residue stretch at 2264–2553 (ATPRQLYKSS…QLLIEPHPPR (290 aa)) folds into the BEACH domain. Ser2565 carries the post-translational modification Phosphoserine. 4 WD repeats span residues 2708–2751 (GHWD…HIIG), 2768–2808 (GHDH…RALE), 2850–2889 (EINDSTRAILLSSDGQNLVTGGDNGVVEVWQACDFKQLYI), and 2892–2931 (GCDAGIRAMDLSHDQRTLITGMASGSIVAFNIDFNRWHYE).

Belongs to the WD repeat neurobeachin family. Interacts with RII subunit of PKA. Forebrain, brainstem and cerebellum.

Its subcellular location is the membrane. It is found in the endomembrane system. The protein resides in the postsynaptic cell membrane. Its function is as follows. Binds to type II regulatory subunits of protein kinase A and anchors/targets them to the membrane. May anchor the kinase to cytoskeletal and/or organelle-associated proteins. May have a role in membrane trafficking. The chain is Neurobeachin (Nbea) from Mus musculus (Mouse).